Here is a 150-residue protein sequence, read N- to C-terminus: Large ribosomal subunit protein bL9 (150 aa).

It belongs to the bacterial ribosomal protein bL9 family.

In terms of biological role, binds to the 23S rRNA. The polypeptide is Large ribosomal subunit protein bL9 (Polaromonas sp. (strain JS666 / ATCC BAA-500)).